A 672-amino-acid polypeptide reads, in one-letter code: Single-strand DNA endonuclease ASTE1 (672 aa).

An interaction with SHLD2 region spans residues 349–398 (TFLHTQVENMQRPNAHRISQPIRQIIYGLLLNGPSHAEDIAQNTLPSQLL).

The protein belongs to the asteroid family. Interacts with SHLD1, SHLD2, SHLD3, RIF1 and MAD2L2/REV7.

In terms of biological role, structure-specific DNA endonuclease that specifically cleaves single-stranded DNA and 3' overhang DNA. Contributes to the control of DNA double-strand break repair choice by antagonizing BRCA1-dependent homologous recombination (HR) and promoting non-homologous end-joining (NHEJ). Recruited to the single-stranded DNA ends by SHLD2 and cleaves the 3' exposed DNA ends, therefore inhibiting DNA end resection (necessary for HR) and promoting DNA end protection (necessary for NHEJ). The protein is Single-strand DNA endonuclease ASTE1 (Aste1) of Mus musculus (Mouse).